The sequence spans 263 residues: Acetyl-coenzyme A carboxylase carboxyl transferase subunit beta (263 aa).

In terms of domain architecture, CoA carboxyltransferase N-terminal spans Met-1–Ala-263. The Zn(2+) site is built by Cys-3, Cys-6, Cys-22, and Cys-25. The segment at Cys-3–Cys-25 adopts a C4-type zinc-finger fold.

Belongs to the AccD/PCCB family. Acetyl-CoA carboxylase is a heterohexamer composed of biotin carboxyl carrier protein (AccB), biotin carboxylase (AccC) and two subunits each of ACCase subunit alpha (AccA) and ACCase subunit beta (AccD). Zn(2+) is required as a cofactor.

The protein resides in the cytoplasm. It carries out the reaction N(6)-carboxybiotinyl-L-lysyl-[protein] + acetyl-CoA = N(6)-biotinyl-L-lysyl-[protein] + malonyl-CoA. It participates in lipid metabolism; malonyl-CoA biosynthesis; malonyl-CoA from acetyl-CoA: step 1/1. Component of the acetyl coenzyme A carboxylase (ACC) complex. Biotin carboxylase (BC) catalyzes the carboxylation of biotin on its carrier protein (BCCP) and then the CO(2) group is transferred by the transcarboxylase to acetyl-CoA to form malonyl-CoA. The chain is Acetyl-coenzyme A carboxylase carboxyl transferase subunit beta from Treponema denticola (strain ATCC 35405 / DSM 14222 / CIP 103919 / JCM 8153 / KCTC 15104).